Here is a 142-residue protein sequence, read N- to C-terminus: MTSVASEPLSSQKRWIVIYPAYIDKKKTAKQGRKISQILAVENPTSVEIHDVLAAVGFNPLLERTKCYPRDGERDFEVQGRVRVQLKNDDGTAKHEQKTRDEIFKMVAEMIPKLKTRQPGYTAPSVASSSAAAAGKKNKKKK.

The tract at residues 115–142 is disordered; sequence KTRQPGYTAPSVASSSAAAAGKKNKKKK. A compositionally biased stretch (low complexity) spans 123–135; sequence APSVASSSAAAAG.

It belongs to the SRP19 family. Component of a signal recognition particle complex that consists of a 7SL RNA molecule of 300 nucleotides and six protein subunits: srpa-72, srpa-68, SRP54, F37F2.2/SRP19, F25G6.8/SRP14 and ZK512.4/SRP9.

The protein localises to the cytoplasm. Its subcellular location is the nucleus. It localises to the nucleolus. Component of the signal recognition particle (SRP) complex, a ribonucleoprotein complex that mediates the cotranslational targeting of secretory and membrane proteins to the endoplasmic reticulum (ER). Binds directly to 7SL RNA. Mediates binding of SRP54 to the SRP complex. The chain is Probable signal recognition particle 19 kDa protein from Caenorhabditis elegans.